The chain runs to 200 residues: Holliday junction resolvase RecU (200 aa).

Residues 1-25 form a disordered region; it reads MTIRYPNGKRYNQASQPHKTPIKKH. The Mg(2+) site is built by T85, D87, E100, and Q119.

This sequence belongs to the RecU family. Mg(2+) is required as a cofactor.

It is found in the cytoplasm. It carries out the reaction Endonucleolytic cleavage at a junction such as a reciprocal single-stranded crossover between two homologous DNA duplexes (Holliday junction).. Its function is as follows. Endonuclease that resolves Holliday junction intermediates in genetic recombination. Cleaves mobile four-strand junctions by introducing symmetrical nicks in paired strands. Promotes annealing of linear ssDNA with homologous dsDNA. Required for DNA repair, homologous recombination and chromosome segregation. In Bacillus thuringiensis (strain Al Hakam), this protein is Holliday junction resolvase RecU.